Here is a 639-residue protein sequence, read N- to C-terminus: Lipoteichoic acid synthase 1 (639 aa).

At 1–3 (MKK) the chain is on the cytoplasmic side. A helical transmembrane segment spans residues 4 to 24 (LFSYKLSFFVLAVILFWAKTY). Residues 25 to 41 (LSYKTEFNLGVKGTTQE) are Extracellular-facing. A helical transmembrane segment spans residues 42–62 (ILLIFNPFSSAVFFLGLALLA). Over 63–67 (KGRKS) the chain is Cytoplasmic. A helical transmembrane segment spans residues 68-88 (AIIMLIIDFLMTFVLYANILF). Residues 89–116 (YRFFDDFLTFPNIKQSGNVGNMGDGIFS) are Extracellular-facing. Residues 117–137 (IMAGHDIFYFLDIIILIAVLI) form a helical membrane-spanning segment. Residues 138–150 (WRPELKEYKMKKR) lie on the Cytoplasmic side of the membrane. A helical transmembrane segment spans residues 151–171 (FASLVILSGIALFFINLHYAE). The Extracellular portion of the chain corresponds to 172–639 (KDRPQLLTRT…YHYGKEKEIK (468 aa)). Residues glutamate 252 and threonine 297 each coordinate Mn(2+). Threonine 297 is an active-site residue. Histidine 413 serves as a coordination point for substrate. Aspartate 472 and histidine 473 together coordinate Mn(2+).

The protein belongs to the LTA synthase family. Proteolytically cleaved by the type I signal peptidases SipT and SipV.

The protein resides in the cell membrane. The protein localises to the secreted. It functions in the pathway cell wall biogenesis; lipoteichoic acid biosynthesis. Its function is as follows. Catalyzes the polymerization of lipoteichoic acid (LTA) polyglycerol phosphate, a reaction that presumably uses phosphatidylglycerol (PG) as substrate. In Bacillus subtilis (strain 168), this protein is Lipoteichoic acid synthase 1 (ltaS1).